Here is a 124-residue protein sequence, read N- to C-terminus: Probable glycine cleavage system H protein (124 aa).

The Lipoyl-binding domain occupies 25-106 (TATIGITDYA…PYGSWLVKMA (82 aa)). Residue lysine 66 is modified to N6-lipoyllysine.

Belongs to the GcvH family. The glycine cleavage system is composed of four proteins: P, T, L and H. The cofactor is (R)-lipoate.

Its function is as follows. The glycine cleavage system catalyzes the degradation of glycine. The H protein shuttles the methylamine group of glycine from the P protein to the T protein. The chain is Probable glycine cleavage system H protein from Thermoplasma acidophilum (strain ATCC 25905 / DSM 1728 / JCM 9062 / NBRC 15155 / AMRC-C165).